Reading from the N-terminus, the 320-residue chain is V-set and transmembrane domain-containing protein 4 (320 aa).

Positions 1-23 are cleaved as a signal peptide; it reads MRLLALAAAALLARAPAPEVCAA. Residues 24 to 155 enclose the Ig-like domain; sequence LNVTVSPGPV…SSATEMRVIS (132 aa). Residues 24–180 lie on the Extracellular side of the membrane; the sequence is LNVTVSPGPV…WAFFEDLYVY (157 aa). N-linked (GlcNAc...) asparagine glycosylation is found at Asn-25, Asn-41, Asn-89, and Asn-144. A disulfide bridge links Cys-46 with Cys-127. A helical membrane pass occupies residues 181 to 201; that stretch reads AVLVCCVGILSILLFMLVIVW. At 202–320 the chain is on the cytoplasmic side; that stretch reads QSVFNKRKSR…AQILFEENKL (119 aa).

Post-translationally, proteolytically cleaved to generate a bioactive peptide.

It is found in the secreted. The protein localises to the cell membrane. Peptide Lv enhances L-type voltage-gated calcium channel (L-VGCC) currents in retinal photoreceptors. In Homo sapiens (Human), this protein is V-set and transmembrane domain-containing protein 4 (VSTM4).